The following is a 950-amino-acid chain: Serine/threonine-protein kinase atg1 (950 aa).

The Protein kinase domain maps to 6 to 311; sequence YTRLDEIGRG…FPDFFENGVI (306 aa). ATP-binding positions include 12-20 and Lys-35; that span reads IGRGSFATV. The active-site Proton acceptor is the Asp-149. Disordered regions lie at residues 314–425, 443–467, 505–570, 671–690, and 926–950; these read PIPG…HATA, RQRG…LREE, QGGI…QSPT, VQTD…NPDS, and PTPS…TPPK. Polar residues-rich tracts occupy residues 370–389, 447–458, and 511–520; these read GLTQ…PTTT, RNTFSEGSPQTD, and GAQTGALSRR. Over residues 549–565 the composition is skewed to basic and acidic residues; that stretch reads SRADSMHNRQSSYERRY.

The protein belongs to the protein kinase superfamily. Ser/Thr protein kinase family. APG1/unc-51/ULK1 subfamily. In terms of assembly, homodimer. Forms a ternary complex with ATG13 and ATG17.

It localises to the cytoplasm. It is found in the preautophagosomal structure membrane. The enzyme catalyses L-seryl-[protein] + ATP = O-phospho-L-seryl-[protein] + ADP + H(+). The catalysed reaction is L-threonyl-[protein] + ATP = O-phospho-L-threonyl-[protein] + ADP + H(+). Serine/threonine protein kinase involved in the cytoplasm to vacuole transport (Cvt) and found to be essential in autophagy, where it is required for the formation of autophagosomes. Involved in the clearance of protein aggregates which cannot be efficiently cleared by the proteasome. Required for selective autophagic degradation of the nucleus (nucleophagy) as well as for mitophagy which contributes to regulate mitochondrial quantity and quality by eliminating the mitochondria to a basal level to fulfill cellular energy requirements and preventing excess ROS production. Also involved in endoplasmic reticulum-specific autophagic process, in selective removal of ER-associated degradation (ERAD) substrates. Plays a key role in ATG9 and ATG23 cycling through the pre-autophagosomal structure and is necessary to promote ATG18 binding to ATG9 through phosphorylation of ATG9. Catalyzes phosphorylation of ATG4, decreasing the interaction between ATG4 and ATG8 and impairing deconjugation of PE-conjugated forms of ATG8. This Neosartorya fischeri (strain ATCC 1020 / DSM 3700 / CBS 544.65 / FGSC A1164 / JCM 1740 / NRRL 181 / WB 181) (Aspergillus fischerianus) protein is Serine/threonine-protein kinase atg1.